The chain runs to 289 residues: 4-hydroxy-3-methylbut-2-enyl diphosphate reductase (289 aa).

Cysteine 12 is a binding site for [4Fe-4S] cluster. The (2E)-4-hydroxy-3-methylbut-2-enyl diphosphate site is built by histidine 44 and histidine 81. Residues histidine 44 and histidine 81 each coordinate dimethylallyl diphosphate. Isopentenyl diphosphate is bound by residues histidine 44 and histidine 81. A [4Fe-4S] cluster-binding site is contributed by cysteine 103. A (2E)-4-hydroxy-3-methylbut-2-enyl diphosphate-binding site is contributed by histidine 130. A dimethylallyl diphosphate-binding site is contributed by histidine 130. Histidine 130 contributes to the isopentenyl diphosphate binding site. The active-site Proton donor is the glutamate 132. Threonine 174 contributes to the (2E)-4-hydroxy-3-methylbut-2-enyl diphosphate binding site. Cysteine 202 is a [4Fe-4S] cluster binding site. The (2E)-4-hydroxy-3-methylbut-2-enyl diphosphate site is built by serine 230, asparagine 232, and serine 273. 3 residues coordinate dimethylallyl diphosphate: serine 230, asparagine 232, and serine 273. Positions 230, 232, and 273 each coordinate isopentenyl diphosphate.

Belongs to the IspH family. It depends on [4Fe-4S] cluster as a cofactor.

The catalysed reaction is isopentenyl diphosphate + 2 oxidized [2Fe-2S]-[ferredoxin] + H2O = (2E)-4-hydroxy-3-methylbut-2-enyl diphosphate + 2 reduced [2Fe-2S]-[ferredoxin] + 2 H(+). The enzyme catalyses dimethylallyl diphosphate + 2 oxidized [2Fe-2S]-[ferredoxin] + H2O = (2E)-4-hydroxy-3-methylbut-2-enyl diphosphate + 2 reduced [2Fe-2S]-[ferredoxin] + 2 H(+). Its pathway is isoprenoid biosynthesis; dimethylallyl diphosphate biosynthesis; dimethylallyl diphosphate from (2E)-4-hydroxy-3-methylbutenyl diphosphate: step 1/1. It functions in the pathway isoprenoid biosynthesis; isopentenyl diphosphate biosynthesis via DXP pathway; isopentenyl diphosphate from 1-deoxy-D-xylulose 5-phosphate: step 6/6. Its function is as follows. Catalyzes the conversion of 1-hydroxy-2-methyl-2-(E)-butenyl 4-diphosphate (HMBPP) into a mixture of isopentenyl diphosphate (IPP) and dimethylallyl diphosphate (DMAPP). Acts in the terminal step of the DOXP/MEP pathway for isoprenoid precursor biosynthesis. The protein is 4-hydroxy-3-methylbut-2-enyl diphosphate reductase of Treponema denticola (strain ATCC 35405 / DSM 14222 / CIP 103919 / JCM 8153 / KCTC 15104).